The following is a 931-amino-acid chain: Glycine dehydrogenase (decarboxylating) (931 aa).

Position 684 is an N6-(pyridoxal phosphate)lysine (lysine 684).

It belongs to the GcvP family. As to quaternary structure, the glycine cleavage system is composed of four proteins: P, T, L and H. The cofactor is pyridoxal 5'-phosphate.

The enzyme catalyses N(6)-[(R)-lipoyl]-L-lysyl-[glycine-cleavage complex H protein] + glycine + H(+) = N(6)-[(R)-S(8)-aminomethyldihydrolipoyl]-L-lysyl-[glycine-cleavage complex H protein] + CO2. In terms of biological role, the glycine cleavage system catalyzes the degradation of glycine. The P protein binds the alpha-amino group of glycine through its pyridoxal phosphate cofactor; CO(2) is released and the remaining methylamine moiety is then transferred to the lipoamide cofactor of the H protein. In Bartonella henselae (strain ATCC 49882 / DSM 28221 / CCUG 30454 / Houston 1) (Rochalimaea henselae), this protein is Glycine dehydrogenase (decarboxylating).